A 231-amino-acid chain; its full sequence is Claudin-10 (231 aa).

The helical transmembrane segment at 1-21 (MASTASEIIAFMVSISGWVLV) threads the bilayer. Topologically, residues 22 to 80 (SSTLPTDYWKVSTIDGTVITTATYWANLWKTCVTDSTGVSNCKDFPSMLALDGYIQACR) are extracellular. Residues 81-101 (GLMIAAVSLGFFGSIFALIGM) traverse the membrane as a helical segment. Residues 102-115 (KCTKVGGSDKAKAK) lie on the Cytoplasmic side of the membrane. Residues 116–136 (IACLAGIVFILSGLCSMTGCS) form a helical membrane-spanning segment. Topologically, residues 137–160 (LYANKITTEFFDPLFVEQKYELGA) are extracellular. A helical transmembrane segment spans residues 161–181 (ALFIGWAGASLCLIGGVIFCF). At 182–231 (SISDNNKAPRMGYTYNGATSVMSSRTKYHGREGDLKTPNPSKQFDKNAYV) the chain is on the cytoplasmic side.

This sequence belongs to the claudin family. In terms of assembly, can form homodimers both in trans (interaction between CLDN10 molecules in opposing membranes) and in cis (interaction between CLDN10 molecules within one membrane). Interacts with CLDN19.

Its subcellular location is the cell junction. The protein resides in the tight junction. It localises to the cell membrane. It carries out the reaction Na(+)(in) = Na(+)(out). It catalyses the reaction Li(+)(in) = Li(+)(out). The catalysed reaction is K(+)(in) = K(+)(out). The enzyme catalyses Rb(+)(in) = Rb(+)(out). It carries out the reaction Cs(+)(in) = Cs(+)(out). It catalyses the reaction NH4(+)(in) = NH4(+)(out). The catalysed reaction is methylamine(out) = methylamine(in). The enzyme catalyses Mg(2+)(in) = Mg(2+)(out). It carries out the reaction Ca(2+)(in) = Ca(2+)(out). It catalyses the reaction Sr(2+)(in) = Sr(2+)(out). The catalysed reaction is chloride(in) = chloride(out). The enzyme catalyses nitrate(in) = nitrate(out). Its function is as follows. Forms paracellular channels: polymerizes in tight junction strands with cation- and anion-selective channels through the strands, conveying epithelial permeability in a process known as paracellular tight junction permeability. In sweat glands and in the thick ascending limb (TAL) of Henle's loop in kidney, it controls paracellular sodium permeability which is essential for proper sweat production and renal function. In renal proximal tubules, it conveys selective chloride over hydrogencarbonate anion permeability which is required for renal chloride reabsorption and salt homeostasis. This chain is Claudin-10 (CLDN10), found in Bos taurus (Bovine).